The following is a 295-amino-acid chain: Acetylglutamate kinase (295 aa).

Residues 66-67 (GG), R88, and N193 each bind substrate.

It belongs to the acetylglutamate kinase family. ArgB subfamily.

The protein resides in the cytoplasm. The enzyme catalyses N-acetyl-L-glutamate + ATP = N-acetyl-L-glutamyl 5-phosphate + ADP. Its pathway is amino-acid biosynthesis; L-arginine biosynthesis; N(2)-acetyl-L-ornithine from L-glutamate: step 2/4. In terms of biological role, catalyzes the ATP-dependent phosphorylation of N-acetyl-L-glutamate. In Rhizobium leguminosarum bv. trifolii (strain WSM2304), this protein is Acetylglutamate kinase.